The following is a 212-amino-acid chain: SOSS complex subunit B1 (212 aa).

A DNA-binding region (OB) is located at residues 22–92 (IVLETGRVTK…TLYTGRGGDL (71 aa)). Residues 110-212 (EPNPEYNTQQ…GKETRRSSKR (103 aa)) are disordered. The span at 114-130 (EYNTQQAPNKSVQNNDN) shows a compositional bias: polar residues. Position 117 is a phosphothreonine; by ATM (Thr117). Over residues 131–148 (SPTAPQATTGPPAASPAS) the composition is skewed to low complexity. A compositionally biased stretch (polar residues) spans 149-160 (ENQNGNGLSTQL). Positions 166–178 (PHPSHTPSHPPST) are enriched in low complexity.

This sequence belongs to the SOSS-B family. SOSS-B1 subfamily. In terms of assembly, component of the SOSS complex, composed of SOSS-B (SOSS-B1/NABP2 or SOSS-B2/NABP1), SOSS-A/INTS3 and SOSS-C/INIP. SOSS complexes containing SOSS-B1/NABP2 are more abundant than complexes containing SOSS-B2/NABP1. Directly interacts with ATM, SOSS-A/INTS3 and RAD51. Interacts with INTS7. Phosphorylated by ATM in response to DNA damage. Phosphorylation prevents degradation by the proteasome, hence stabilization of the protein and accumulation within cells. Post-translationally, ubiquitinated in a FBXL5-dependent manner, leading to proteasomal degradation.

It is found in the nucleus. Its function is as follows. Component of the SOSS complex, a multiprotein complex that functions downstream of the MRN complex to promote DNA repair and G2/M checkpoint. In the SOSS complex, acts as a sensor of single-stranded DNA that binds to single-stranded DNA, in particular to polypyrimidines. The SOSS complex associates with DNA lesions and influences diverse endpoints in the cellular DNA damage response including cell-cycle checkpoint activation, recombinational repair and maintenance of genomic stability. Required for efficient homologous recombination-dependent repair of double-strand breaks (DSBs) and ATM-dependent signaling pathways. The protein is SOSS complex subunit B1 (Nabp2) of Mus musculus (Mouse).